A 356-amino-acid polypeptide reads, in one-letter code: 4-hydroxy-2-oxovalerate aldolase (356 aa).

The 251-residue stretch at 7 to 257 (PRVTDTTLRD…NPGLDVFKLM (251 aa)) folds into the Pyruvate carboxyltransferase domain. Residue 15 to 16 (RD) coordinates substrate. A Mn(2+)-binding site is contributed by D16. H19 functions as the Proton acceptor in the catalytic mechanism. The substrate site is built by S169 and H196. 2 residues coordinate Mn(2+): H196 and H198. Y287 contributes to the substrate binding site.

This sequence belongs to the 4-hydroxy-2-oxovalerate aldolase family.

It catalyses the reaction (S)-4-hydroxy-2-oxopentanoate = acetaldehyde + pyruvate. This is 4-hydroxy-2-oxovalerate aldolase from Thermomicrobium roseum (strain ATCC 27502 / DSM 5159 / P-2).